A 157-amino-acid polypeptide reads, in one-letter code: MNKAIPVLKLPVDFRLSLSIPQGDLYVSPDRGLVYGLRADAAVGDIVSKNHMVEMRITDAKTKRHTVDVGPGECDVLVVNPQGTISINSFTSSLIGGARSICVVGEEDLLVIPFTLVRGFKIIYGQPDVGVVISSPSRERVLKILKGLKPDIVIMNL.

The GTP site is built by D40, D59, K61, E107, and D128.

It belongs to the GTP-dependent DPCK family.

The catalysed reaction is 3'-dephospho-CoA + GTP = GDP + CoA + H(+). The protein operates within cofactor biosynthesis; coenzyme A biosynthesis. In terms of biological role, catalyzes the GTP-dependent phosphorylation of the 3'-hydroxyl group of dephosphocoenzyme A to form coenzyme A (CoA). The protein is GTP-dependent dephospho-CoA kinase of Desulfurococcus amylolyticus (strain DSM 18924 / JCM 16383 / VKM B-2413 / 1221n) (Desulfurococcus kamchatkensis).